The primary structure comprises 248 residues: ATP synthase subunit a, chloroplastic (248 aa).

5 helical membrane-spanning segments follow: residues 35-55 (GQVF…SFLG), 94-114 (VPYI…GALI), 133-153 (INTT…AGLS), 202-222 (VFTL…GLFA), and 224-244 (SIQA…AMEG).

Belongs to the ATPase A chain family. In terms of assembly, F-type ATPases have 2 components, CF(1) - the catalytic core - and CF(0) - the membrane proton channel. CF(1) has five subunits: alpha(3), beta(3), gamma(1), delta(1), epsilon(1). CF(0) has four main subunits: a, b, b' and c.

Its subcellular location is the plastid. The protein localises to the chloroplast thylakoid membrane. Its function is as follows. Key component of the proton channel; it plays a direct role in the translocation of protons across the membrane. The chain is ATP synthase subunit a, chloroplastic from Pyropia yezoensis (Susabi-nori).